A 208-amino-acid polypeptide reads, in one-letter code: MSSQYSNVENLSPQTIRQVMKELQDMETTPPEGIKVLINESDVTDIQAFIDGPAGTPYAVGVFRVKLTLSKDFPQTPPKAYFLTKIFHPNVASNGEICVNTLKKDWKPDLGIKHILLTIKCLLIVPNPESALNEEAGKMLLERYDDYSQRARMMTEIHAQPAKCGAGASDAKDDDGPSTKKHAGLDKKLQDKKKEKLLKEKKRMLKRL.

One can recognise a UBC core domain in the interval 14-160 (QTIRQVMKEL…ARMMTEIHAQ (147 aa)). Cys-98 functions as the Glycyl thioester intermediate in the catalytic mechanism. Positions 161-193 (PAKCGAGASDAKDDDGPSTKKHAGLDKKLQDKK) are disordered. Basic and acidic residues predominate over residues 170-193 (DAKDDDGPSTKKHAGLDKKLQDKK).

The protein belongs to the ubiquitin-conjugating enzyme family.

The catalysed reaction is S-ubiquitinyl-[E1 ubiquitin-activating enzyme]-L-cysteine + [E2 ubiquitin-conjugating enzyme]-L-cysteine = [E1 ubiquitin-activating enzyme]-L-cysteine + S-ubiquitinyl-[E2 ubiquitin-conjugating enzyme]-L-cysteine.. It functions in the pathway protein modification; protein ubiquitination. Functionally, catalyzes the covalent attachment of ubiquitin to other proteins. Acts as an essential factor of the anaphase promoting complex/cyclosome (APC/C), a cell cycle-regulated ubiquitin ligase that controls progression through mitosis. Acts by specifically elongating polyubiquitin chains initiated by the E2 enzyme vih/UbcH10 on APC/C substrates, enhancing the degradation of APC/C substrates by the proteasome and promoting mitotic exit. The polypeptide is Ubiquitin-conjugating enzyme E2 S (Drosophila virilis (Fruit fly)).